Reading from the N-terminus, the 469-residue chain is Cyclin-dependent kinase 14 (469 aa).

Phosphoserine occurs at positions 24, 78, and 95. Positions Phe103 to Asp133 are disordered. The residue at position 134 (Ser134) is a Phosphoserine. One can recognise a Protein kinase domain in the interval Tyr135 to Phe419. Residues Leu141–Val149 and Lys164 each bind ATP. Asp256 serves as the catalytic Proton acceptor. The disordered stretch occupies residues Glu449–His469. The span at Lys456–His469 shows a compositional bias: polar residues.

Belongs to the protein kinase superfamily. CMGC Ser/Thr protein kinase family. CDC2/CDKX subfamily. In terms of assembly, found in a complex with LRP6, CCNY and CAPRIN2 during G2/M stage; CAPRIN2 functions as a scaffold for the complex by binding to CCNY via its N terminus and to CDK14 via its C terminus. Interacts with CCNY; CCNY mediates its recruitment to the plasma membrane and promotes phosphorylation of LRP6. Interacts with CCDN3 and CDKN1A. Interacts with SEPT8. Interacts with 14-3-3 proteina YWHAB, YWHAE, YWHAH and YWHAQ. In terms of tissue distribution, highly expressed in brain, pancreas, kidney, heart, testis and ovary. Also detected at lower levels in other tissues except in spleen and thymus where expression is barely detected.

The protein localises to the cell membrane. It is found in the cytoplasm. The protein resides in the nucleus. It carries out the reaction L-seryl-[protein] + ATP = O-phospho-L-seryl-[protein] + ADP + H(+). The enzyme catalyses L-threonyl-[protein] + ATP = O-phospho-L-threonyl-[protein] + ADP + H(+). Its activity is regulated as follows. Serine/threonine-protein kinase activity is promoted by associated cyclins CCDN3 and CCNY and repressed by CDKN1A. Serine/threonine-protein kinase involved in the control of the eukaryotic cell cycle, whose activity is controlled by an associated cyclin. Acts as a cell-cycle regulator of Wnt signaling pathway during G2/M phase by mediating the phosphorylation of LRP6 at 'Ser-1490', leading to the activation of the Wnt signaling pathway. Acts as a regulator of cell cycle progression and cell proliferation via its interaction with CCDN3. Phosphorylates RB1 in vitro, however the relevance of such result remains to be confirmed in vivo. May also play a role in meiosis, neuron differentiation and may indirectly act as a negative regulator of insulin-responsive glucose transport. This Homo sapiens (Human) protein is Cyclin-dependent kinase 14 (CDK14).